The chain runs to 417 residues: NADH-quinone oxidoreductase subunit D (417 aa).

The protein belongs to the complex I 49 kDa subunit family. In terms of assembly, NDH-1 is composed of 14 different subunits. Subunits NuoB, C, D, E, F, and G constitute the peripheral sector of the complex.

The protein resides in the cell inner membrane. It carries out the reaction a quinone + NADH + 5 H(+)(in) = a quinol + NAD(+) + 4 H(+)(out). Its function is as follows. NDH-1 shuttles electrons from NADH, via FMN and iron-sulfur (Fe-S) centers, to quinones in the respiratory chain. The immediate electron acceptor for the enzyme in this species is believed to be ubiquinone. Couples the redox reaction to proton translocation (for every two electrons transferred, four hydrogen ions are translocated across the cytoplasmic membrane), and thus conserves the redox energy in a proton gradient. This is NADH-quinone oxidoreductase subunit D from Burkholderia ambifaria (strain ATCC BAA-244 / DSM 16087 / CCUG 44356 / LMG 19182 / AMMD) (Burkholderia cepacia (strain AMMD)).